A 159-amino-acid polypeptide reads, in one-letter code: MVKVERLLINYKTLEEFKKFREYGIQELSMLEDLESNMIENDSNSPFYGIYYGNRLVARMSLYKVDGKSNQYFEEGQDYLELWKLEVLPGYQRNGYGTMLVEFAKSFGLPIRTSPRVKSSDFWNKMGFTPVKYDMARDKGENPLVWHPASEPSQSSESA.

Residues 7 to 151 enclose the N-acetyltransferase domain; it reads LLINYKTLEE…NPLVWHPASE (145 aa).

This is an uncharacterized protein from Bacillus licheniformis (strain ATCC 14580 / DSM 13 / JCM 2505 / CCUG 7422 / NBRC 12200 / NCIMB 9375 / NCTC 10341 / NRRL NRS-1264 / Gibson 46).